Here is a 121-residue protein sequence, read N- to C-terminus: MEAKAIARHIRVTPMKARRVVNLVRGKQANEALAILKFAPQAASEPVFKVVQSAISNARVLADRDGVAFDEGDLIISEAFVDEGPTMKRFQPRAQGRAFQIKKRTSHITVVVATPEKEEAR.

It belongs to the universal ribosomal protein uL22 family. In terms of assembly, part of the 50S ribosomal subunit.

Functionally, this protein binds specifically to 23S rRNA; its binding is stimulated by other ribosomal proteins, e.g. L4, L17, and L20. It is important during the early stages of 50S assembly. It makes multiple contacts with different domains of the 23S rRNA in the assembled 50S subunit and ribosome. In terms of biological role, the globular domain of the protein is located near the polypeptide exit tunnel on the outside of the subunit, while an extended beta-hairpin is found that lines the wall of the exit tunnel in the center of the 70S ribosome. This chain is Large ribosomal subunit protein uL22, found in Arthrobacter sp. (strain FB24).